Consider the following 108-residue polypeptide: Beta-defensin 126 (108 aa).

The signal sequence occupies residues 1-20 (MKSLLFTLAVFMLLAQLVSG). An in vitro binds to LPS, mediates antimicrobial activity and inhibits LPS-mediated inflammation region spans residues 21 to 63 (NWYVKKCLNDVGICKKKCKPGEMHIKNGWATCGKQRDCCVPAD). 3 disulfide bridges follow: Cys27–Cys58, Cys34–Cys52, and Cys38–Cys59.

It belongs to the beta-defensin family. As to quaternary structure, homodimer or homooligomer; disulfide-linked. Post-translationally, O-glycosylated; glycans contain alpha(2,3)-linked sialic acids.

The protein localises to the secreted. In terms of biological role, highly glycosylated atypical beta-defensin involved in several aspects of sperm function. Facilitates sperm transport in the female reproductive tract and contributes to sperm protection against immunodetection; both functions are probably implicating the negative surface charge provided by its O-linked oligosaccharides in the sperm glycocalyx. Involved in binding of sperm to oviductal epithelial cells to form a sperm reservoir until ovulation. Release from the sperm surface during capacitation and ovaluation by an elevation of oviductal fluid pH is unmasking other surface components and allows sperm to penetrate the cumulus matrix and bind to the zona pellucida of the oocyte. In vitro has antimicrobial activity and may inhibit LPS-mediated inflammation. The chain is Beta-defensin 126 (DEFB126) from Pan troglodytes (Chimpanzee).